A 397-amino-acid polypeptide reads, in one-letter code: CCA-adding enzyme (397 aa).

ATP contacts are provided by glycine 26 and arginine 29. Residues glycine 26 and arginine 29 each coordinate CTP. Residues aspartate 39 and aspartate 41 each contribute to the Mg(2+) site. ATP is bound by residues arginine 110, aspartate 153, arginine 156, arginine 159, and arginine 162. 5 residues coordinate CTP: arginine 110, aspartate 153, arginine 156, arginine 159, and arginine 162.

The protein belongs to the tRNA nucleotidyltransferase/poly(A) polymerase family. Bacterial CCA-adding enzyme type 3 subfamily. As to quaternary structure, homodimer. Requires Mg(2+) as cofactor.

The catalysed reaction is a tRNA precursor + 2 CTP + ATP = a tRNA with a 3' CCA end + 3 diphosphate. It carries out the reaction a tRNA with a 3' CCA end + 2 CTP + ATP = a tRNA with a 3' CCACCA end + 3 diphosphate. Functionally, catalyzes the addition and repair of the essential 3'-terminal CCA sequence in tRNAs without using a nucleic acid template. Adds these three nucleotides in the order of C, C, and A to the tRNA nucleotide-73, using CTP and ATP as substrates and producing inorganic pyrophosphate. tRNA 3'-terminal CCA addition is required both for tRNA processing and repair. Also involved in tRNA surveillance by mediating tandem CCA addition to generate a CCACCA at the 3' terminus of unstable tRNAs. While stable tRNAs receive only 3'-terminal CCA, unstable tRNAs are marked with CCACCA and rapidly degraded. The polypeptide is CCA-adding enzyme (Bacillus cereus (strain ZK / E33L)).